A 165-amino-acid polypeptide reads, in one-letter code: Large ribosomal subunit protein uL10 (165 aa).

The protein belongs to the universal ribosomal protein uL10 family. In terms of assembly, part of the ribosomal stalk of the 50S ribosomal subunit. The N-terminus interacts with L11 and the large rRNA to form the base of the stalk. The C-terminus forms an elongated spine to which L12 dimers bind in a sequential fashion forming a multimeric L10(L12)X complex.

Forms part of the ribosomal stalk, playing a central role in the interaction of the ribosome with GTP-bound translation factors. This Pectobacterium carotovorum subsp. carotovorum (strain PC1) protein is Large ribosomal subunit protein uL10.